Here is a 201-residue protein sequence, read N- to C-terminus: Dynactin subunit 6 (201 aa).

The protein belongs to the dynactin subunits 5/6 family. Dynactin subunit 6 subfamily. As to quaternary structure, member of the pointed-end complex of the dynactin shoulder complex which contains dctn4, dctn5 and dctn6 subunits and Actr10. Within the complex dctn6 forms a heterodimer with dctn5. Interacts with plk1.

The protein resides in the cytoplasm. It is found in the cytoskeleton. The protein localises to the chromosome. Its subcellular location is the centromere. It localises to the kinetochore. Its function is as follows. Part of the dynactin complex that activates the molecular motor dynein for ultra-processive transport along microtubules. This Xenopus tropicalis (Western clawed frog) protein is Dynactin subunit 6 (dctn6).